We begin with the raw amino-acid sequence, 230 residues long: uncharacterized protein (230 aa).

Active-site charge relay system residues include S124 and H158.

Belongs to the peptidase S51 family.

This is an uncharacterized protein from Bacillus subtilis (strain 168).